The sequence spans 372 residues: Ribosomal RNA small subunit methyltransferase H (372 aa).

S-adenosyl-L-methionine contacts are provided by residues Gly44–His46, Asp63, Leu97, Asp111, and Gln118. A compositionally biased stretch (basic and acidic residues) spans Arg315 to Arg334. The interval Arg315–Ser372 is disordered. Residues Thr361–Ser372 show a composition bias toward acidic residues.

The protein belongs to the methyltransferase superfamily. RsmH family.

The protein resides in the cytoplasm. The catalysed reaction is cytidine(1402) in 16S rRNA + S-adenosyl-L-methionine = N(4)-methylcytidine(1402) in 16S rRNA + S-adenosyl-L-homocysteine + H(+). In terms of biological role, specifically methylates the N4 position of cytidine in position 1402 (C1402) of 16S rRNA. The chain is Ribosomal RNA small subunit methyltransferase H from Salinispora arenicola (strain CNS-205).